A 52-amino-acid polypeptide reads, in one-letter code: Ribosome modulation factor (52 aa).

It belongs to the ribosome modulation factor family.

It localises to the cytoplasm. Functionally, during stationary phase, converts 70S ribosomes to an inactive dimeric form (100S ribosomes). The sequence is that of Ribosome modulation factor from Xenorhabdus nematophila (strain ATCC 19061 / DSM 3370 / CCUG 14189 / LMG 1036 / NCIMB 9965 / AN6).